Reading from the N-terminus, the 273-residue chain is Dermonecrotic toxin LvSicTox-alphaIC1ai (273 aa).

Residue His5 is part of the active site. Glu25 and Asp27 together coordinate Mg(2+). Residue His41 is the Nucleophile of the active site. 2 cysteine pairs are disulfide-bonded: Cys45-Cys51 and Cys47-Cys190. Asp85 is a Mg(2+) binding site.

Belongs to the arthropod phospholipase D family. Class II subfamily. The cofactor is Mg(2+). As to expression, expressed by the venom gland.

Its subcellular location is the secreted. The enzyme catalyses an N-(acyl)-sphingosylphosphocholine = an N-(acyl)-sphingosyl-1,3-cyclic phosphate + choline. It carries out the reaction an N-(acyl)-sphingosylphosphoethanolamine = an N-(acyl)-sphingosyl-1,3-cyclic phosphate + ethanolamine. The catalysed reaction is a 1-acyl-sn-glycero-3-phosphocholine = a 1-acyl-sn-glycero-2,3-cyclic phosphate + choline. It catalyses the reaction a 1-acyl-sn-glycero-3-phosphoethanolamine = a 1-acyl-sn-glycero-2,3-cyclic phosphate + ethanolamine. Dermonecrotic toxins cleave the phosphodiester linkage between the phosphate and headgroup of certain phospholipids (sphingolipid and lysolipid substrates), forming an alcohol (often choline) and a cyclic phosphate. This toxin acts on sphingomyelin (SM). It may also act on ceramide phosphoethanolamine (CPE), lysophosphatidylcholine (LPC) and lysophosphatidylethanolamine (LPE), but not on lysophosphatidylserine (LPS), and lysophosphatidylglycerol (LPG). It acts by transphosphatidylation, releasing exclusively cyclic phosphate products as second products. Induces dermonecrosis, hemolysis, increased vascular permeability, edema, inflammatory response, and platelet aggregation. The protein is Dermonecrotic toxin LvSicTox-alphaIC1ai of Loxosceles variegata (Recluse spider).